The following is a 264-amino-acid chain: U1 snRNP-associated protein usp106 (264 aa).

Residues Asp83 to Thr126 adopt a coiled-coil conformation. The segment covering Glu233–Ile258 has biased composition (basic and acidic residues). Residues Glu233–Ala264 form a disordered region.

Belongs to the Luc7 family. As to quaternary structure, component of the U1 snRNP particle, a subcomplex of the spliceosome.

It localises to the cytoplasm. The protein localises to the nucleus. In terms of biological role, component of the U1 snRNP particle, which recognizes and binds the 5'-splice site of pre-mRNA. Together with other non-snRNP factors, U1 snRNP forms the spliceosomal commitment complex, that targets pre-mRNA to the splicing pathway. This Schizosaccharomyces pombe (strain 972 / ATCC 24843) (Fission yeast) protein is U1 snRNP-associated protein usp106 (usp106).